The chain runs to 553 residues: Chaperonin GroEL (553 aa).

Residues Thr30–Pro33, Lys51, Asp87–Thr91, Gly416, and Asp496 each bind ATP.

Belongs to the chaperonin (HSP60) family. Forms a cylinder of 14 subunits composed of two heptameric rings stacked back-to-back. Interacts with the co-chaperonin GroES.

It is found in the cytoplasm. The catalysed reaction is ATP + H2O + a folded polypeptide = ADP + phosphate + an unfolded polypeptide.. Its function is as follows. Together with its co-chaperonin GroES, plays an essential role in assisting protein folding. The GroEL-GroES system forms a nano-cage that allows encapsulation of the non-native substrate proteins and provides a physical environment optimized to promote and accelerate protein folding. The polypeptide is Chaperonin GroEL (Alkalilimnicola ehrlichii (strain ATCC BAA-1101 / DSM 17681 / MLHE-1)).